A 287-amino-acid polypeptide reads, in one-letter code: Endolytic peptidoglycan transglycosylase RlpA (287 aa).

The N-terminal stretch at 1–25 (MKLKTGLNLTALLLFMISVAFPAQA) is a signal peptide. Residues 209–284 (LKGTEFYCLK…ANNKPLIVYT (76 aa)) form the SPOR domain.

Belongs to the RlpA family.

Lytic transglycosylase with a strong preference for naked glycan strands that lack stem peptides. This Haemophilus influenzae (strain ATCC 51907 / DSM 11121 / KW20 / Rd) protein is Endolytic peptidoglycan transglycosylase RlpA.